The following is a 405-amino-acid chain: Glutathione S-transferase LANCL1 (405 aa).

Residue C282 participates in Zn(2+) binding. K323 contributes to the glutathione binding site. Positions 328 and 329 each coordinate Zn(2+). A glutathione-binding site is contributed by 370–373 (RTPD).

Belongs to the LanC-like protein family.

It is found in the cytoplasm. The protein localises to the cell membrane. The catalysed reaction is RX + glutathione = an S-substituted glutathione + a halide anion + H(+). It catalyses the reaction 1-chloro-2,4-dinitrobenzene + glutathione = 2,4-dinitrophenyl-S-glutathione + chloride + H(+). Its function is as follows. Functions as a glutathione transferase. Catalyzes conjugation of the glutathione (GSH) to artificial substrates 1-chloro-2,4-dinitrobenzene (CDNB) and p-nitrophenyl acetate. Binds glutathione. This is Glutathione S-transferase LANCL1 from Danio rerio (Zebrafish).